The primary structure comprises 629 residues: tRNA uridine 5-carboxymethylaminomethyl modification enzyme MnmG (629 aa).

Residue Gly4 to Gly9 participates in FAD binding. Gly268–Phe282 is a binding site for NAD(+).

Belongs to the MnmG family. Homodimer. Heterotetramer of two MnmE and two MnmG subunits. It depends on FAD as a cofactor.

It localises to the cytoplasm. Functionally, NAD-binding protein involved in the addition of a carboxymethylaminomethyl (cmnm) group at the wobble position (U34) of certain tRNAs, forming tRNA-cmnm(5)s(2)U34. This Helicobacter hepaticus (strain ATCC 51449 / 3B1) protein is tRNA uridine 5-carboxymethylaminomethyl modification enzyme MnmG.